A 123-amino-acid chain; its full sequence is Holo-[acyl-carrier-protein] synthase (123 aa).

Positions 8 and 55 each coordinate Mg(2+).

This sequence belongs to the P-Pant transferase superfamily. AcpS family. The cofactor is Mg(2+).

Its subcellular location is the cytoplasm. The enzyme catalyses apo-[ACP] + CoA = holo-[ACP] + adenosine 3',5'-bisphosphate + H(+). Transfers the 4'-phosphopantetheine moiety from coenzyme A to a Ser of acyl-carrier-protein. The chain is Holo-[acyl-carrier-protein] synthase from Caldicellulosiruptor saccharolyticus (strain ATCC 43494 / DSM 8903 / Tp8T 6331).